The primary structure comprises 148 residues: 1,4-dihydroxy-2-naphthoyl-CoA hydrolase (148 aa).

The active site involves Asp-15.

It belongs to the 4-hydroxybenzoyl-CoA thioesterase family. DHNA-CoA hydrolase subfamily.

It catalyses the reaction 1,4-dihydroxy-2-naphthoyl-CoA + H2O = 1,4-dihydroxy-2-naphthoate + CoA + H(+). It functions in the pathway cofactor biosynthesis; phylloquinone biosynthesis. The protein operates within quinol/quinone metabolism; 1,4-dihydroxy-2-naphthoate biosynthesis; 1,4-dihydroxy-2-naphthoate from chorismate: step 7/7. Catalyzes the hydrolysis of 1,4-dihydroxy-2-naphthoyl-CoA (DHNA-CoA) to 1,4-dihydroxy-2-naphthoate (DHNA), a reaction involved in phylloquinone (vitamin K1) biosynthesis. The chain is 1,4-dihydroxy-2-naphthoyl-CoA hydrolase from Nostoc punctiforme (strain ATCC 29133 / PCC 73102).